The chain runs to 207 residues: Probable mediator of RNA polymerase II transcription subunit 19b (207 aa).

The interval 99–207 (DTAPVELPPA…SSKLDEMGAM (109 aa)) is disordered. Residues 127–152 (DRKHRKHKDKKEKDREHKKHKHKHKD) show a composition bias toward basic residues. Residues 153–167 (RIKDKDKDKDRDKKK) show a composition bias toward basic and acidic residues. The span at 168 to 179 (EKSGHHDKKRKN) shows a compositional bias: basic residues.

The protein belongs to the plant Mediator complex subunit 19 family. As to quaternary structure, component of the Mediator complex.

Its subcellular location is the nucleus. Its function is as follows. Component of the Mediator complex, a coactivator involved in the regulated transcription of nearly all RNA polymerase II-dependent genes. Mediator functions as a bridge to convey information from gene-specific regulatory proteins to the basal RNA polymerase II transcription machinery. The Mediator complex, having a compact conformation in its free form, is recruited to promoters by direct interactions with regulatory proteins and serves for the assembly of a functional preinitiation complex with RNA polymerase II and the general transcription factors. The protein is Probable mediator of RNA polymerase II transcription subunit 19b (MED19B) of Arabidopsis thaliana (Mouse-ear cress).